We begin with the raw amino-acid sequence, 398 residues long: CCA-adding enzyme (398 aa).

Positions 32 and 35 each coordinate ATP. CTP is bound by residues glycine 32 and arginine 35. Mg(2+) contacts are provided by aspartate 45 and aspartate 47. ATP-binding residues include arginine 116, aspartate 159, arginine 162, arginine 165, and arginine 168. CTP-binding residues include arginine 116, aspartate 159, arginine 162, arginine 165, and arginine 168.

This sequence belongs to the tRNA nucleotidyltransferase/poly(A) polymerase family. Bacterial CCA-adding enzyme type 3 subfamily. Homodimer. Mg(2+) is required as a cofactor.

The catalysed reaction is a tRNA precursor + 2 CTP + ATP = a tRNA with a 3' CCA end + 3 diphosphate. It carries out the reaction a tRNA with a 3' CCA end + 2 CTP + ATP = a tRNA with a 3' CCACCA end + 3 diphosphate. Functionally, catalyzes the addition and repair of the essential 3'-terminal CCA sequence in tRNAs without using a nucleic acid template. Adds these three nucleotides in the order of C, C, and A to the tRNA nucleotide-73, using CTP and ATP as substrates and producing inorganic pyrophosphate. tRNA 3'-terminal CCA addition is required both for tRNA processing and repair. Also involved in tRNA surveillance by mediating tandem CCA addition to generate a CCACCA at the 3' terminus of unstable tRNAs. While stable tRNAs receive only 3'-terminal CCA, unstable tRNAs are marked with CCACCA and rapidly degraded. The protein is CCA-adding enzyme of Lactobacillus johnsonii (strain CNCM I-12250 / La1 / NCC 533).